The sequence spans 100 residues: Aspartyl/glutamyl-tRNA(Asn/Gln) amidotransferase subunit C (100 aa).

The protein belongs to the GatC family. Heterotrimer of A, B and C subunits.

The enzyme catalyses L-glutamyl-tRNA(Gln) + L-glutamine + ATP + H2O = L-glutaminyl-tRNA(Gln) + L-glutamate + ADP + phosphate + H(+). The catalysed reaction is L-aspartyl-tRNA(Asn) + L-glutamine + ATP + H2O = L-asparaginyl-tRNA(Asn) + L-glutamate + ADP + phosphate + 2 H(+). Its function is as follows. Allows the formation of correctly charged Asn-tRNA(Asn) or Gln-tRNA(Gln) through the transamidation of misacylated Asp-tRNA(Asn) or Glu-tRNA(Gln) in organisms which lack either or both of asparaginyl-tRNA or glutaminyl-tRNA synthetases. The reaction takes place in the presence of glutamine and ATP through an activated phospho-Asp-tRNA(Asn) or phospho-Glu-tRNA(Gln). This chain is Aspartyl/glutamyl-tRNA(Asn/Gln) amidotransferase subunit C, found in Streptococcus pneumoniae (strain JJA).